The chain runs to 361 residues: Phospho-N-acetylmuramoyl-pentapeptide-transferase (361 aa).

The next 10 membrane-spanning stretches (helical) occupy residues 25 to 45 (RAVL…PAVI), 73 to 93 (TMGG…WADL), 97 to 117 (YVWL…VDDW), 134 to 154 (YFWQ…TASL), 168 to 188 (ATFG…IVGA), 200 to 220 (GLAI…AYVA), 237 to 257 (AGEL…FLWF), 264 to 284 (VFMG…VAVV), 289 to 309 (IILF…MIQV), and 338 to 358 (QVVV…LSSL).

It belongs to the glycosyltransferase 4 family. MraY subfamily. Requires Mg(2+) as cofactor.

The protein resides in the cell inner membrane. The catalysed reaction is UDP-N-acetyl-alpha-D-muramoyl-L-alanyl-gamma-D-glutamyl-meso-2,6-diaminopimeloyl-D-alanyl-D-alanine + di-trans,octa-cis-undecaprenyl phosphate = di-trans,octa-cis-undecaprenyl diphospho-N-acetyl-alpha-D-muramoyl-L-alanyl-D-glutamyl-meso-2,6-diaminopimeloyl-D-alanyl-D-alanine + UMP. It functions in the pathway cell wall biogenesis; peptidoglycan biosynthesis. In terms of biological role, catalyzes the initial step of the lipid cycle reactions in the biosynthesis of the cell wall peptidoglycan: transfers peptidoglycan precursor phospho-MurNAc-pentapeptide from UDP-MurNAc-pentapeptide onto the lipid carrier undecaprenyl phosphate, yielding undecaprenyl-pyrophosphoryl-MurNAc-pentapeptide, known as lipid I. The chain is Phospho-N-acetylmuramoyl-pentapeptide-transferase from Thiobacillus denitrificans (strain ATCC 25259 / T1).